The sequence spans 146 residues: Ribonuclease H (146 aa).

One can recognise an RNase H type-1 domain in the interval 1–143; it reads MQKKVTIYTD…CDYLATQAIK (143 aa). Positions 10, 48, 70, and 135 each coordinate Mg(2+).

The protein belongs to the RNase H family. As to quaternary structure, monomer. Mg(2+) is required as a cofactor.

It is found in the cytoplasm. It carries out the reaction Endonucleolytic cleavage to 5'-phosphomonoester.. Endonuclease that specifically degrades the RNA of RNA-DNA hybrids. The protein is Ribonuclease H of Chlorobium phaeobacteroides (strain BS1).